A 137-amino-acid chain; its full sequence is Acidic phospholipase A2 PL-II (137 aa).

The signal sequence occupies residues alanine 1–leucine 17. Intrachain disulfides connect cysteine 28-cysteine 89, cysteine 44-cysteine 136, cysteine 46-cysteine 62, cysteine 61-cysteine 117, cysteine 68-cysteine 110, cysteine 78-cysteine 103, and cysteine 96-cysteine 108. Positions 45, 47, and 49 each coordinate Ca(2+). Histidine 65 is an active-site residue. Aspartate 66 serves as a coordination point for Ca(2+). Residue aspartate 111 is part of the active site.

Ca(2+) serves as cofactor. In terms of tissue distribution, expressed by the venom gland.

It is found in the secreted. The catalysed reaction is a 1,2-diacyl-sn-glycero-3-phosphocholine + H2O = a 1-acyl-sn-glycero-3-phosphocholine + a fatty acid + H(+). Its function is as follows. Snake venom phospholipase A2 (PLA2) that may act in the hemostasis system of the prey. Exhibits hydrolytic activities, and prefers the anionic micelles (dPPC with deoxycholate) (54 umol/mg/min) to the zwitterionic micelles (dPPC with Triton X-100) (15 umol/mg/min). PLA2 catalyzes the calcium-dependent hydrolysis of the 2-acyl groups in 3-sn-phosphoglycerides. The chain is Acidic phospholipase A2 PL-II from Walterinnesia aegyptia (Desert black snake).